The following is a 357-amino-acid chain: Peptide chain release factor 1 (357 aa).

The residue at position 236 (Gln-236) is an N5-methylglutamine.

Belongs to the prokaryotic/mitochondrial release factor family. Post-translationally, methylated by PrmC. Methylation increases the termination efficiency of RF1.

The protein resides in the cytoplasm. Functionally, peptide chain release factor 1 directs the termination of translation in response to the peptide chain termination codons UAG and UAA. In Mycobacterium bovis (strain ATCC BAA-935 / AF2122/97), this protein is Peptide chain release factor 1 (prfA).